The primary structure comprises 227 residues: ATP-dependent dethiobiotin synthetase BioD (227 aa).

13–18 (DIGKTY) contributes to the ATP binding site. A Mg(2+)-binding site is contributed by threonine 17. Lysine 38 is an active-site residue. Serine 42 provides a ligand contact to substrate. Residues aspartate 55, 116-119 (EGSG), and 179-180 (NN) each bind ATP. 2 residues coordinate Mg(2+): aspartate 55 and glutamate 116.

The protein belongs to the dethiobiotin synthetase family. Homodimer. The cofactor is Mg(2+).

The protein resides in the cytoplasm. It carries out the reaction (7R,8S)-7,8-diammoniononanoate + CO2 + ATP = (4R,5S)-dethiobiotin + ADP + phosphate + 3 H(+). It functions in the pathway cofactor biosynthesis; biotin biosynthesis; biotin from 7,8-diaminononanoate: step 1/2. Catalyzes a mechanistically unusual reaction, the ATP-dependent insertion of CO2 between the N7 and N8 nitrogen atoms of 7,8-diaminopelargonic acid (DAPA, also called 7,8-diammoniononanoate) to form a ureido ring. This is ATP-dependent dethiobiotin synthetase BioD from Clostridium botulinum (strain 657 / Type Ba4).